The following is a 65-amino-acid chain: Pancreatic polypeptide prohormone (65 aa).

A Tyrosine amide modification is found at Y36. Positions 59 to 65 (ELSPMGA) are excised as a propeptide.

It belongs to the NPY family.

The protein resides in the secreted. Its function is as follows. Hormone secreted by pancreatic cells that acts as a regulator of pancreatic and gastrointestinal functions probably by signaling through the G protein-coupled receptor NPY4R2. The sequence is that of Pancreatic polypeptide prohormone (PPY) from Sus scrofa (Pig).